Consider the following 1038-residue polypeptide: MTHQTHTIAESNNFIVLDKYIKAEPTGDSYQSESDLERELIQDLRNQGYEFISVKSQSAMLANVREQLQNLNGVVFNDSEWRRFTEQYLDNPSDGILDKTRKIHIDYICDFIFDDERLENIYLIDKKNLMRNKVQIIQQFEQAGSHANRYDVTILVNGLPLVQIELKKRGVAIREAFNQIHRYSKESFNSENSLFKYLQLFVISNGTDTRYFANTTKRDKNSFDFTMNWAKSDNTLIKDLKDFTATCFQKHTLLNVLVNYSVFDSSQTLLVMRPYQIAATERILWKIKSSFTAKNWSKPESGGYIWHTTGSGKTLTSFKAARLATELDFIDKVFFVVDRKDLDYQTMKEYQRFSPDSVNGSENTAGLKRNLDKDDNKIIVTTIQKLNNLMKAESDLPVYNQQVVFIFDECHRSQFGEAQKNLKKKFKRYYQFGFTGTPIFPENALGSETTASVFGRELHSYVITDAIRDEKVLKFKVDYNDVRPQFKSLETETDEKKLSAAENQQAFLHPMRIQEITQYILNNFRQKTHRTFPGSKGFNAMLAVSSVDAAKAYYATFKRLQEEAANKSATYKPLRIATIFSFAANEEQNAIGEISDETFDTSAMDSSAKEFLDAAIREYNSHFKTNFSTDSNGFQNYYRDLAQRVKNQDIDLLIVVGMFLTGFDAPTLNTLFVDKNLRYHGLMQAFSRTNRIYDATKTFGNIVTFRDLERSTIDAITLFGDKNTKNVVLEKSYTEYMEGFTDAATGEAKRGFMTVVSELEQRFPDPTSIESEKEKKDFVKLFGEYLRAENILQNYDEFATLKALQQIDLSDPVAVEKFKAEHYVDDEKFAELQTIRLPADRKIQDYRSAYNDIRDWQRREKEAEKKEKSTTDWDDVVFEVDLLKSQEINLDYILGLIFEHNRQNKGKGEMIEEVKRLIRSSLGNRAKEGLVVDFIQQTNLDDLPDKASIIDAFFTFAQREQQREAEALIKEENLNEDAAKRYIRTSLKREYATENGTELNETLPKLSPLNPQYKTKKQAVFQKIVSFIEKFKGVGGKI.

Positions 31–249 are nuclease domain; the sequence is QSESDLEREL…LKDFTATCFQ (219 aa). Residues 250 to 469 are motor 1 domain; sequence KHTLLNVLVN…SYVITDAIRD (220 aa). One can recognise a Helicase ATP-binding domain in the interval 294 to 439; that stretch reads KNWSKPESGG…YQFGFTGTPI (146 aa). An ATP-binding site is contributed by 307–314; sequence HTTGSGKT. The DEAH box motif lies at 408–411; sequence DECH. The segment at 470 to 702 is motor 2 domain; that stretch reads EKVLKFKVDY…YDATKTFGNI (233 aa). Positions 720–732 are motor 2-helicase linker; sequence GDKNTKNVVLEKS. The segment at 732 to 860 is helicase domain; that stretch reads SYTEYMEGFT…NDIRDWQRRE (129 aa). The segment at 859–886 is helicase-CTD linker; that stretch reads REKEAEKKEKSTTDWDDVVFEVDLLKSQ. Residues 886 to 1038 are C-terminal domain; sequence QEINLDYILG…EKFKGVGGKI (153 aa).

This sequence belongs to the HsdR family. In terms of assembly, a monomer in solution. The type I restriction/modification system is composed of three polypeptides R, M and S; the restriction enzyme has stoichiometry R(2)M(2)S(1) while the methyltransferase is M(2)S(1). There is an equilibrium between R(2)M(2)S(1) and R(1)M(2)S(1); the latter is methylation and translocation proficient but restriction deficient. As to quaternary structure, (Microbial infection) Holoenenzyme interacts with Escherichia phage T7 protein Ocr; this interaction leads to the inhibition of the restriction activity, but may still allow methylation and translocation.

The catalysed reaction is Endonucleolytic cleavage of DNA to give random double-stranded fragments with terminal 5'-phosphates, ATP is simultaneously hydrolyzed.. Functionally, the restriction (R) subunit of a type I restriction enzyme that recognizes 5'-GAAN(6)RTCG-3' (for EcoR124I) and 5'-GAAN(7)RTCG-3' (for EcoR124II) and cleaves a random distance away. Subunit R is required for both nuclease and ATPase activities, but not for modification. After locating an unmethylated recognition site, the enzyme complex serves as a molecular motor that translocates DNA in an ATP-dependent manner until a collision occurs that triggers cleavage. The enzyme undergoes major structural changes to bring the motor domains into contact with DNA, allowing DNA translocation. This prevents DNA access to the catalytic domains of both the R and M subunits, preventing both restriction and methylation. The R(1)M(2)S(1) complex translocates an average of 555 bp/second on nicked DNA; the R(2)M(2)S(1) complex translocates at double that speed. The 2 R subunit motors are independent and track along the helical pitch of the DNA, inducing positive supercoiling ahead of themselves. In Escherichia coli, this protein is Type I restriction enzyme EcoR124I/EcoR124II endonuclease subunit.